The following is a 206-amino-acid chain: Small ribosomal subunit protein uS4 (206 aa).

The S4 RNA-binding domain maps to 96–159 (SRLDNVVYRM…KKQARIVEGL (64 aa)).

It belongs to the universal ribosomal protein uS4 family. Part of the 30S ribosomal subunit. Contacts protein S5. The interaction surface between S4 and S5 is involved in control of translational fidelity.

Its function is as follows. One of the primary rRNA binding proteins, it binds directly to 16S rRNA where it nucleates assembly of the body of the 30S subunit. In terms of biological role, with S5 and S12 plays an important role in translational accuracy. This Chromobacterium violaceum (strain ATCC 12472 / DSM 30191 / JCM 1249 / CCUG 213 / NBRC 12614 / NCIMB 9131 / NCTC 9757 / MK) protein is Small ribosomal subunit protein uS4.